The primary structure comprises 382 residues: Pyrimidine monooxygenase RutA (382 aa).

Residues 68 to 69, Asn134, Glu143, 159 to 160, and Ser209 each bind FMN; these read IK and RY.

It belongs to the NtaA/SnaA/DszA monooxygenase family. RutA subfamily.

The enzyme catalyses uracil + FMNH2 + NADH + O2 = (Z)-3-ureidoacrylate + FMN + NAD(+) + H2O + H(+). It carries out the reaction thymine + FMNH2 + NADH + O2 = (Z)-2-methylureidoacrylate + FMN + NAD(+) + H2O + H(+). In terms of biological role, catalyzes the pyrimidine ring opening between N-3 and C-4 by an unusual flavin hydroperoxide-catalyzed mechanism, adding oxygen atoms in the process to yield ureidoacrylate peracid, that immediately reacts with FMN forming ureidoacrylate and FMN-N(5)-oxide. The FMN-N(5)-oxide reacts spontaneously with NADH to produce FMN. Requires the flavin reductase RutF to regenerate FMN in vivo. The chain is Pyrimidine monooxygenase RutA from Escherichia coli O8 (strain IAI1).